Reading from the N-terminus, the 594-residue chain is Laccase-2 (594 aa).

Positions methionine 1 to serine 20 are cleaved as a signal peptide. An N-linked (GlcNAc...) asparagine glycan is attached at asparagine 67. Plastocyanin-like domains are found at residues glutamate 70–asparagine 183 and aspartate 195–glycine 357. Histidine 117 and histidine 119 together coordinate Cu cation. Asparagine 124 is a glycosylation site (N-linked (GlcNAc...) asparagine). Residues cysteine 138 and cysteine 578 are joined by a disulfide bond. Cu cation contacts are provided by histidine 162 and histidine 164. 8 N-linked (GlcNAc...) asparagine glycosylation sites follow: asparagine 242, asparagine 286, asparagine 320, asparagine 358, asparagine 397, asparagine 430, asparagine 452, and asparagine 458. The region spanning proline 466–glutamate 563 is the Plastocyanin-like 3 domain. Positions 480, 483, and 485 each coordinate Cu cation. Asparagine 508 carries an N-linked (GlcNAc...) asparagine glycan. Residues histidine 543, cysteine 544, histidine 545, and histidine 549 each coordinate Cu cation.

Belongs to the multicopper oxidase family. The cofactor is Cu cation.

It localises to the secreted. The protein resides in the cell wall. The catalysed reaction is 4 hydroquinone + O2 = 4 benzosemiquinone + 2 H2O. Functionally, laccase that catalyzes the oxidation of certain aromatic compounds, including L-dopa, to quinones, which then polymerize to melanin. Able to oxidize a wide variety of aromatic diphenol and diamino groups in the ortho, meta, and para positions but not monophenolic groups such as in phenol, tyramine, or tyrosine. Plays an important role in virulence. Plays a role in dissemination to extrapulmonary sites but is not involved in pulmonary growth or in elicitation of cellular immune responses in the lung. This Cryptococcus neoformans var. grubii serotype A (strain H99 / ATCC 208821 / CBS 10515 / FGSC 9487) (Filobasidiella neoformans var. grubii) protein is Laccase-2 (LAC2).